A 217-amino-acid polypeptide reads, in one-letter code: Large ribosomal subunit protein uL1 (217 aa).

Position 2 is an N-acetylserine (S2). Residue Y11 is modified to Phosphotyrosine. N6-acetyllysine is present on residues K91 and K106. K118 carries the post-translational modification N6-acetyllysine; alternate. A Glycyl lysine isopeptide (Lys-Gly) (interchain with G-Cter in SUMO1); alternate cross-link involves residue K118. Residue K118 forms a Glycyl lysine isopeptide (Lys-Gly) (interchain with G-Cter in SUMO2); alternate linkage. A Glycyl lysine isopeptide (Lys-Gly) (interchain with G-Cter in SUMO2) cross-link involves residue K161.

The protein belongs to the universal ribosomal protein uL1 family. Component of the large ribosomal subunit.

It is found in the cytoplasm. Functionally, component of the large ribosomal subunit. The ribosome is a large ribonucleoprotein complex responsible for the synthesis of proteins in the cell. This is Large ribosomal subunit protein uL1 (Rpl10a) from Mus musculus (Mouse).